Reading from the N-terminus, the 215-residue chain is Probable phosphoglycerate mutase GpmB (215 aa).

Residues 8–15 (RHGETQWN), 21–22 (QG), R58, R60, 82–85 (ELNM), 104–105 (RR), and 151–152 (GI) each bind substrate. Residue H9 is the Tele-phosphohistidine intermediate of the active site. Catalysis depends on E82, which acts as the Proton donor/acceptor.

Belongs to the phosphoglycerate mutase family. GpmB subfamily.

It catalyses the reaction (2R)-2-phosphoglycerate = (2R)-3-phosphoglycerate. It functions in the pathway carbohydrate degradation; glycolysis; pyruvate from D-glyceraldehyde 3-phosphate: step 3/5. The polypeptide is Probable phosphoglycerate mutase GpmB (Shigella dysenteriae serotype 1 (strain Sd197)).